The following is a 161-amino-acid chain: Nucleotide-binding protein PFLU_4927 (161 aa).

This sequence belongs to the YajQ family.

In terms of biological role, nucleotide-binding protein. In Pseudomonas fluorescens (strain SBW25), this protein is Nucleotide-binding protein PFLU_4927.